Reading from the N-terminus, the 66-residue chain is Large ribosomal subunit protein bL31 (66 aa).

4 residues coordinate Zn(2+): Cys-16, Cys-18, Cys-36, and Cys-39.

This sequence belongs to the bacterial ribosomal protein bL31 family. Type A subfamily. Part of the 50S ribosomal subunit. Zn(2+) is required as a cofactor.

Functionally, binds the 23S rRNA. The chain is Large ribosomal subunit protein bL31 from Nitratiruptor sp. (strain SB155-2).